The following is a 484-amino-acid chain: Malonate-semialdehyde dehydrogenase 2 (484 aa).

Phenylalanine 153, lysine 177, glutamate 180, arginine 181, serine 230, and threonine 252 together coordinate NAD(+). Residue cysteine 285 is the Nucleophile of the active site. Glutamate 385 contacts NAD(+).

This sequence belongs to the aldehyde dehydrogenase family. IolA subfamily. Homotetramer.

It catalyses the reaction 3-oxopropanoate + NAD(+) + CoA + H2O = hydrogencarbonate + acetyl-CoA + NADH + H(+). The catalysed reaction is 2-methyl-3-oxopropanoate + NAD(+) + CoA + H2O = propanoyl-CoA + hydrogencarbonate + NADH + H(+). It functions in the pathway polyol metabolism; myo-inositol degradation into acetyl-CoA; acetyl-CoA from myo-inositol: step 7/7. Functionally, catalyzes the oxidation of malonate semialdehyde (MSA) and methylmalonate semialdehyde (MMSA) into acetyl-CoA and propanoyl-CoA, respectively. Is involved in a myo-inositol catabolic pathway. Bicarbonate, and not CO2, is the end-product of the enzymatic reaction. The polypeptide is Malonate-semialdehyde dehydrogenase 2 (Geobacillus kaustophilus (strain HTA426)).